A 293-amino-acid polypeptide reads, in one-letter code: Elongation factor Ts (293 aa).

The interval 80-83 (TDFV) is involved in Mg(2+) ion dislocation from EF-Tu.

Belongs to the EF-Ts family.

The protein localises to the cytoplasm. Functionally, associates with the EF-Tu.GDP complex and induces the exchange of GDP to GTP. It remains bound to the aminoacyl-tRNA.EF-Tu.GTP complex up to the GTP hydrolysis stage on the ribosome. In Aeromonas salmonicida (strain A449), this protein is Elongation factor Ts.